Consider the following 605-residue polypeptide: MKKYLHILPACFLFYAAAHAQQKDTVYVTDFGAVPYSYENCVTQIQAAIDECKRTGAKVLSLPEGRYDIWPEGAIRKEYYISNTSTEQECPSKVKTVGLMLHEIDDLTIEGNGATLMYHGKMTTIALEHCNGVRINNLHIDFERPAGSEIQYRKVTGGETEVTLHRDTRYEIVNGKIRLYGEGWRSNRNHCIEYDPDTESFTYSQGWNTLSASDAREIAPGIVRFNTPAEFMPKAGNTLTVRDIIRDQVGLFILESKNITLSRLQMHYMHGLGIVSQYTENITMDRVKCAPRPDSGRLLAASADMMHFSGCKGKVIIDSCYFAGAQDDPVNVHGTNLRALEKIDAQTLKLRFMHGQSYGFNAYFKGDTVAFVRAATMERFASATVRDVRRISDRIVEVRFDRDIPTSLELNHDCVENMTCTPEVEIRNCYFTRTSTRGTLVTTPRKVVIENNTYYKTGMSAILIEADAEGWYESGPVKDVLIKGNTFIDCAYNGGPGHAVIAIHPSNKIIDAERPVHQNIRIEDNTFRTFDYPVLYAKSTAGLLFRNNTIVRTETFPAVSGNPYVFYLNGCKKAVIEGTVFEGETPRQSIKTENMKRKDLKTTIK.

The N-terminal stretch at 1–20 is a signal peptide; that stretch reads MKKYLHILPACFLFYAAAHA. PbH1 repeat units follow at residues 256–278, 312–334, 421–443, 444–466, 477–507, and 517–547; these read SKNITLSRLQMHYMHGLGIVSQY, KGKVIIDSCYFAGAQDDPVNVHG, TPEVEIRNCYFTRTSTRGTLVTT, PRKVVIENNTYYKTGMSAILIEA, VKDVLIKGNTFIDCAYNGGPGHAVIAIHPSN, and HQNIRIEDNTFRTFDYPVLYAKSTAGLLFRN.

Belongs to the glycosyl hydrolase 110 family. A subfamily.

It catalyses the reaction Hydrolysis of terminal, non-reducing branched (1-&gt;3)-alpha-D-galactosidic residues, producing free D-galactose.. It carries out the reaction Hydrolysis of terminal, non-reducing alpha-D-galactose residues in alpha-D-galactosides, including galactose oligosaccharides, galactomannans and galactolipids.. In terms of biological role, alpha-galactosidase that specifically removes branched alpha-1,3-linked galactose residues present in blood group B antigens. Has no activity toward linear alpha-1,3-linked galactose residues. The protein is Alpha-1,3-galactosidase A (glaA) of Bacteroides fragilis (strain ATCC 25285 / DSM 2151 / CCUG 4856 / JCM 11019 / LMG 10263 / NCTC 9343 / Onslow / VPI 2553 / EN-2).